We begin with the raw amino-acid sequence, 160 residues long: ATP synthase subunit delta, mitochondrial (160 aa).

The transit peptide at 1–22 (MLRSIIGKSASRSLNFVAKRSY) directs the protein to the mitochondrion.

It belongs to the ATPase epsilon chain family. F-type ATPases have 2 components, CF(1) - the catalytic core - and CF(0) - the membrane proton channel. CF(1) has five subunits: alpha(3), beta(3), gamma(1), delta(1), epsilon(1). CF(0) has three main subunits: a, b and c.

Its subcellular location is the mitochondrion. It is found in the mitochondrion inner membrane. Mitochondrial membrane ATP synthase (F(1)F(0) ATP synthase or Complex V) produces ATP from ADP in the presence of a proton gradient across the membrane which is generated by electron transport complexes of the respiratory chain. F-type ATPases consist of two structural domains, F(1) - containing the extramembraneous catalytic core, and F(0) - containing the membrane proton channel, linked together by a central stalk and a peripheral stalk. During catalysis, ATP turnover in the catalytic domain of F(1) is coupled via a rotary mechanism of the central stalk subunits to proton translocation. Part of the complex F(1) domain and of the central stalk which is part of the complex rotary element. Rotation of the central stalk against the surrounding alpha(3)beta(3) subunits leads to hydrolysis of ATP in three separate catalytic sites on the beta subunits. The chain is ATP synthase subunit delta, mitochondrial (ATP16) from Saccharomyces cerevisiae (strain ATCC 204508 / S288c) (Baker's yeast).